We begin with the raw amino-acid sequence, 445 residues long: Histamine H3 receptor (445 aa).

The Extracellular portion of the chain corresponds to 1–39 (MERAPPDGLMNASGALAGEAAAAGGARGFSAAWTAVLAA). A glycan (N-linked (GlcNAc...) asparagine) is linked at Asn-11. A helical membrane pass occupies residues 40 to 60 (LMALLIVATVLGNALVMLAFV). Over 61-70 (ADSSLRTQNN) the chain is Cytoplasmic. The chain crosses the membrane as a helical span at residues 71–91 (FFLLNLAISDFLVGAFCIPLY). Residues 92–108 (VPYVLTGRWTFGRGLCK) lie on the Extracellular side of the membrane. A disulfide bridge connects residues Cys-107 and Cys-188. The chain crosses the membrane as a helical span at residues 109–129 (LWLVVDYLLCASSVFNIVLIS). Residues 130 to 156 (YDRFLSVTRAVSYRAQQGDTRRAVRKM) lie on the Cytoplasmic side of the membrane. A helical membrane pass occupies residues 157–177 (ALVWVLAFLLYGPAILSWEYL). At 178 to 196 (SGGSSIPEGHCYAEFFYNW) the chain is on the extracellular side. A helical transmembrane segment spans residues 197–217 (YFLITASTLEFFTPFLSVTFF). Topologically, residues 218–359 (NLSIYLNIQR…LSRDKKVAKS (142 aa)) are cytoplasmic. Disordered regions lie at residues 234–259 (DGGR…PSCW) and 273–336 (HRYG…LEKR). The segment covering 241-256 (PEPPPDAQPSPPPAPP) has biased composition (pro residues). Over residues 289–299 (AGLGGGSGGGA) the composition is skewed to gly residues. The segment covering 300–312 (AASPTSSSGSSSR) has biased composition (low complexity). Residues 360 to 380 (LAIIVSIFGLCWAPYTLLMII) traverse the membrane as a helical segment. The Extracellular portion of the chain corresponds to 381–396 (RAACHGHCVPDYWYET). The helical transmembrane segment at 397–417 (SFWLLWANSAVNPVLYPLCHY) threads the bilayer. Residues 418–445 (SFRRAFTKLLCPQKLKVQPHGSLEQCWK) lie on the Cytoplasmic side of the membrane. Position 439 is a phosphoserine (Ser-439).

It belongs to the G-protein coupled receptor 1 family.

Its subcellular location is the cell membrane. Functionally, the H3 subclass of histamine receptors could mediate the histamine signals in CNS and peripheral nervous system. Signals through the inhibition of adenylate cyclase and displays high constitutive activity (spontaneous activity in the absence of agonist). The sequence is that of Histamine H3 receptor (Hrh3) from Mus musculus (Mouse).